A 394-amino-acid polypeptide reads, in one-letter code: Bone morphogenetic protein 15 (394 aa).

A signal peptide spans 1 to 18; it reads MVLLSILRILLLWGLVLF. Residues 19-269 constitute a propeptide that is removed on maturation; it reads MEHRVQMTQV…DPSLLLRRAR (251 aa). 2 N-linked (GlcNAc...) asparagine glycosylation sites follow: asparagine 87 and asparagine 238. 3 cysteine pairs are disulfide-bonded: cysteine 293–cysteine 359, cysteine 322–cysteine 391, and cysteine 326–cysteine 393. The N-linked (GlcNAc...) asparagine glycan is linked to asparagine 375.

Belongs to the TGF-beta family. In terms of assembly, homodimer or heterodimer (Potential). But, in contrast to other members of this family, cannot be disulfide-linked.

Its subcellular location is the secreted. Functionally, may be involved in follicular development. Seems to be an oocyte-specific growth/differentiation factor that stimulates folliculogenesis and granulosa cell (GC) growth. This chain is Bone morphogenetic protein 15 (BMP15), found in Bos taurus (Bovine).